We begin with the raw amino-acid sequence, 389 residues long: WAT1-related protein At1g21890 (389 aa).

A run of 10 helical transmembrane segments spans residues L13–L33, Y40–F60, I73–Y93, T102–F122, V142–I162, W191–L211, L225–V245, F260–V280, V287–V307, and I312–W332. 2 consecutive EamA domains span residues A23–L150 and W205–V331. Residues R339–T361 are disordered.

This sequence belongs to the drug/metabolite transporter (DMT) superfamily. Plant drug/metabolite exporter (P-DME) (TC 2.A.7.4) family.

It localises to the membrane. The polypeptide is WAT1-related protein At1g21890 (Arabidopsis thaliana (Mouse-ear cress)).